A 372-amino-acid chain; its full sequence is Riboflavin biosynthesis protein RibD (372 aa).

Residues 1–150 (MLEFSSQDCV…KGFLKRMRQG (150 aa)) are deaminase. In terms of domain architecture, CMP/dCMP-type deaminase spans 6–128 (SQDCVFMQRA…MLSDAGIEST (123 aa)). His-55 serves as a coordination point for Zn(2+). Glu-57 functions as the Proton donor in the catalytic mechanism. Residues Cys-80 and Cys-89 each coordinate Zn(2+). The interval 151–372 (MPFVQLKLAM…IKLTYTPKGV (222 aa)) is reductase. NADP(+) is bound by residues Ala-159 and 166–169 (TAMA). Ser-173 contacts substrate. Trp-175 provides a ligand contact to NADP(+). Substrate is bound at residue Arg-189. NADP(+) is bound by residues Thr-201 and Asp-205. Substrate-binding residues include Leu-209 and Arg-212. Residue Ser-239 participates in NADP(+) binding. Residue Glu-302 participates in substrate binding. Residue 304 to 310 (GANLSGS) participates in NADP(+) binding.

This sequence in the N-terminal section; belongs to the cytidine and deoxycytidylate deaminase family. In the C-terminal section; belongs to the HTP reductase family. Requires Zn(2+) as cofactor.

It carries out the reaction 2,5-diamino-6-hydroxy-4-(5-phosphoribosylamino)-pyrimidine + H2O + H(+) = 5-amino-6-(5-phospho-D-ribosylamino)uracil + NH4(+). It catalyses the reaction 5-amino-6-(5-phospho-D-ribitylamino)uracil + NADP(+) = 5-amino-6-(5-phospho-D-ribosylamino)uracil + NADPH + H(+). It participates in cofactor biosynthesis; riboflavin biosynthesis; 5-amino-6-(D-ribitylamino)uracil from GTP: step 2/4. It functions in the pathway cofactor biosynthesis; riboflavin biosynthesis; 5-amino-6-(D-ribitylamino)uracil from GTP: step 3/4. Converts 2,5-diamino-6-(ribosylamino)-4(3h)-pyrimidinone 5'-phosphate into 5-amino-6-(ribosylamino)-2,4(1h,3h)-pyrimidinedione 5'-phosphate. In Haemophilus influenzae (strain ATCC 51907 / DSM 11121 / KW20 / Rd), this protein is Riboflavin biosynthesis protein RibD (ribD).